We begin with the raw amino-acid sequence, 506 residues long: Maturase K (506 aa).

The protein belongs to the intron maturase 2 family. MatK subfamily.

Its subcellular location is the plastid. The protein resides in the chloroplast. Usually encoded in the trnK tRNA gene intron. Probably assists in splicing its own and other chloroplast group II introns. This is Maturase K from Erica tetralix (Cross-leaved heath).